Reading from the N-terminus, the 86-residue chain is Small ribosomal subunit protein bS18 (86 aa).

It belongs to the bacterial ribosomal protein bS18 family. In terms of assembly, part of the 30S ribosomal subunit. Forms a tight heterodimer with protein bS6.

Binds as a heterodimer with protein bS6 to the central domain of the 16S rRNA, where it helps stabilize the platform of the 30S subunit. The sequence is that of Small ribosomal subunit protein bS18 from Heliobacterium modesticaldum (strain ATCC 51547 / Ice1).